Consider the following 503-residue polypeptide: MINIRPDEISSIIREQIEQYDQDVKIDNIGTVLQVGDGIARVYGLDQVMSGELLEFEDKTIGIALNLENDNVGVVLMGNGRQILEGGSVKSTGQIAQIPVGEAFLGRVVNPLGAPIDGKGDIASTETRLVESMAPGIISRKSVCEPLQTGITSIDAMIPIGRGQRELIIGDRQTGKTSIAVDTIINQKTEDVVCVYVGIGQKASTIAQVVNVLDEKEAMAYTIIVSASANDPATLQYIAPYSGAALAEYFMYNGKATLIVYDDLTKQAMAYRQMSLLLRRPPGREAYPGDVFYLHSRLLERAAKLSDALGGGSMTALPIIETQASDVSAYIPTNVISITDGQIFLSNDLFNSGIRPAINVGISVSRVGSAAQTKAMKQVAGKLKLELAQFAELEAFSQFASDLDEATQKQLARGTRLREILKQPQNSPLSVAQQVALIYAGINGFLDNLAVSDVKKFSASLIQTLASQKSYIDVVGKTNQFTEEAETLLKEAIASTKTGFATL.

Residue 170-177 (GDRQTGKT) coordinates ATP.

The protein belongs to the ATPase alpha/beta chains family. F-type ATPases have 2 components, CF(1) - the catalytic core - and CF(0) - the membrane proton channel. CF(1) has five subunits: alpha(3), beta(3), gamma(1), delta(1), epsilon(1). CF(0) has four main subunits: a, b, b' and c.

Its subcellular location is the plastid. The protein resides in the chloroplast thylakoid membrane. The catalysed reaction is ATP + H2O + 4 H(+)(in) = ADP + phosphate + 5 H(+)(out). Its function is as follows. Produces ATP from ADP in the presence of a proton gradient across the membrane. The alpha chain is a regulatory subunit. This Thalassiosira pseudonana (Marine diatom) protein is ATP synthase subunit alpha, chloroplastic.